Here is an 84-residue protein sequence, read N- to C-terminus: Neurotoxin BM10-1-like (84 aa).

A signal peptide spans 1 to 21; sequence MKTLLLTLVVVTIVCLDLGYT. Intrachain disulfides connect Cys-24/Cys-47, Cys-27/Cys-32, Cys-40/Cys-64, Cys-68/Cys-76, and Cys-77/Cys-82.

It belongs to the three-finger toxin family. Ancestral subfamily. Orphan group IV sub-subfamily. Expressed by the venom gland.

The protein resides in the secreted. In terms of biological role, binds and inhibits muscular and neuronal nicotinic acetylcholine receptors (nAChR). The protein is Neurotoxin BM10-1-like of Bungarus multicinctus (Many-banded krait).